The chain runs to 467 residues: Glutamate--tRNA ligase (467 aa).

Residues 15–25 (PSPTGYLHVGG) carry the 'HIGH' region motif. Positions 249–253 (KLSKR) match the 'KMSKS' region motif. An ATP-binding site is contributed by Lys-252.

It belongs to the class-I aminoacyl-tRNA synthetase family. Glutamate--tRNA ligase type 1 subfamily. In terms of assembly, monomer.

It localises to the cytoplasm. It carries out the reaction tRNA(Glu) + L-glutamate + ATP = L-glutamyl-tRNA(Glu) + AMP + diphosphate. In terms of biological role, catalyzes the attachment of glutamate to tRNA(Glu) in a two-step reaction: glutamate is first activated by ATP to form Glu-AMP and then transferred to the acceptor end of tRNA(Glu). The protein is Glutamate--tRNA ligase of Coprothermobacter proteolyticus (strain ATCC 35245 / DSM 5265 / OCM 4 / BT).